The following is a 530-amino-acid chain: TNF receptor-associated factor 6 (530 aa).

Residues 1–362 (MSLLNCENSC…EAQQCNGIYI (362 aa)) are interaction with TAX1BP1. The segment at 70 to 109 (CPICLMALREAVQTPCGHRFCKACITKSIRDAGHKCPVDN) adopts an RING-type; degenerate zinc-finger fold. K124 is covalently cross-linked (Glycyl lysine isopeptide (Lys-Gly) (interchain with G-Cter in SUMO); alternate). K124 is covalently cross-linked (Glycyl lysine isopeptide (Lys-Gly) (interchain with G-Cter in ubiquitin); alternate). K142 participates in a covalent cross-link: Glycyl lysine isopeptide (Lys-Gly) (interchain with G-Cter in SUMO). 2 consecutive TRAF-type zinc fingers follow at residues 150–202 (DHQV…EEKE) and 203–259 (IHDQ…NHLA). The stretch at 302-356 (NYEETVKQLEGRLVRQDHQIRELTAKMETQSMHVSELKRTIRSLEDKVAEMEAQQ) forms a coiled coil. K327 is covalently cross-linked (Glycyl lysine isopeptide (Lys-Gly) (interchain with G-Cter in ubiquitin)). The region spanning 358 to 507 (NGIYIWKIGN…DDTLLVRCEV (150 aa)) is the MATH domain. The interval 363-530 (WKIGNFGMHL…FQPRSTDAGV (168 aa)) is interaction with TANK. Residue K461 forms a Glycyl lysine isopeptide (Lys-Gly) (interchain with G-Cter in SUMO) linkage.

It belongs to the TNF receptor-associated factor family. A subfamily. As to quaternary structure, homotrimer. Homooligomer. N-terminal region is dimeric while C-terminal region is trimeric; maybe providing a mode of oligomerization. Upon IL1B treatment, forms a complex with PELI1, IRAK1, IRAK4 and MYD88; this complex recruits MAP3K7/TAK1, TAB1 and TAB2 to mediate NF-kappa-B activation. Direct binding of SMAD6 to PELI1 prevents the complex formation and hence negatively regulates IL1R-TLR signaling and eventually NF-kappa-B-mediated gene expression. Binds to TNFRSF5/CD40 and TNFRSF11A/RANK. Associates with NGFR, TNFRSF17, IRAK2, IRAK3, RIPK2, MAP3K1, MAP3K5, MAP3K14, CSK, TRAF, TRAF-interacting protein TRIP and TNF receptor associated protein TDP2. Interacts with IL17R. Interacts with SQSTM1 bridging NTRK1 and NGFR. Forms a ternary complex with SQSTM1 and PRKCZ. Interacts with PELI2 and PELI3. Binds UBE2V1. Interacts with TAX1BP1; this interaction mediates deubiquitination of TRAF6 and inhibition of NF-kappa-B activation. Interacts with ZNF675. Interacts with ARRB1 and ARRB2. Interacts with MAP3K7 and TAB1/MAP3K7IP1; during IL-1 signaling. Interacts with UBE2N. Interacts with TGFBR1, HDAC1 and RANGAP1. Interacts with AKT1, AKT2 and AKT3. Interacts (via TRAF domains) with NUMBL (via C-terminal). Interacts with RBCK1. Interacts with LIMD1 (via LIM domains). Interacts with RSAD2/viperin. Interacts (via C-terminus) with EIF2AK2/PKR (via the kinase catalytic domain). Interacts with ZFAND5. Interacts with IL1RL1. Interacts with TRAFD1. Interacts with AJUBA. Interacts with MAVS/IPS1. Interacts (via TRAF domains) with DYNC2I2 (via WD domains). Interacts with IFIT3 (via N-terminus). Interacts with TICAM2. Interacts with CARD14. Interacts with CD40 and MAP3K8; the interaction is required for ERK activation. Interacts with TICAM1 and this interaction is enhanced in the presence of WDFY1. Interacts with TANK; this interaction increases in response to DNA damage. Interacts with USP10; this interaction increases in response to DNA damage. Interacts with ZC3H12A; this interaction increases in response to DNA damage and is stimulated by TANK. Interacts with WDFY3. Interacts with TRIM13. Interacts with GPS2. Interacts (via C-terminus) with SASH1. Interacts with LRRC19. Interacts with IL17RA and TRAF3IP2. Interacts with TOMM70. Interacts with AMBRA1; interaction is required to mediate 'Lys-63'-linked ubiquitination of ULK1. Interacts with CRBN; this interaction inhibits TLR4-mediated signaling by preventing TRAF6-mediated ubiquitination of ECSIT. Post-translationally, sumoylated on Lys-124, Lys-142 and Lys-461 with SUMO1. Polyubiquitinated on Lys-124 by TRAF3IP2; after cell stimulation with IL17A. Polyubiquitinated; after cell stimulation with IL1B or TGFB. This ligand-induced cell stimulation leads to dimerization/oligomerization of TRAF6 molecules, followed by auto-ubiquitination which involves UBE2N and UBE2V1 and leads to TRAF6 activation. This 'Lys-63' site-specific poly-ubiquitination appears to be associated with the activation of signaling molecules. Endogenous autoubiquitination occurs only for the cytoplasmic form. Deubiquitinated by USP10 in a TANK-dependent manner, leading to the negative regulation of NF-kappa-B signaling upon DNA damage. LRRC19 induces 'Lys-63' ubiquitination. Ubiquitinated at Lys-327 by the SCF(FBXL2) complex, leading to its degradation by the proteasome.

The protein resides in the cytoplasm. It is found in the cell cortex. It localises to the nucleus. The protein localises to the lipid droplet. It carries out the reaction S-ubiquitinyl-[E2 ubiquitin-conjugating enzyme]-L-cysteine + [acceptor protein]-L-lysine = [E2 ubiquitin-conjugating enzyme]-L-cysteine + N(6)-ubiquitinyl-[acceptor protein]-L-lysine.. It functions in the pathway protein modification; protein ubiquitination. Functionally, E3 ubiquitin ligase that, together with UBE2N and UBE2V1, mediates the synthesis of 'Lys-63'-linked-polyubiquitin chains conjugated to proteins, such as ECSIT, IKBKG, IRAK1, AKT1 and AKT2. Also mediates ubiquitination of free/unanchored polyubiquitin chain that leads to MAP3K7 activation. Leads to the activation of NF-kappa-B and JUN. Seems to also play a role in dendritic cells (DCs) maturation and/or activation. Represses c-Myb-mediated transactivation, in B-lymphocytes. Adapter protein that seems to play a role in signal transduction initiated via TNF receptor, IL-1 receptor and IL-17 receptor. Regulates osteoclast differentiation by mediating the activation of adapter protein complex 1 (AP-1) and NF-kappa-B, in response to RANK-L stimulation. Together with MAP3K8, mediates CD40 signals that activate ERK in B-cells and macrophages, and thus may play a role in the regulation of immunoglobulin production. Acts as a regulator of the JNK and NF-kappa-B signaling pathways by initiating assembly of heterotypic 'Lys-63'-/'Lys-48'-linked branched ubiquitin chains that are then recognized by TAB2: TRAF6 catalyzes initial 'Lys-63'-linked-polyubiquitin chains that are then branched via 'Lys-48'-linked polyubiquitin by HUWE1. 'Lys-63'-/'Lys-48'-linked branched ubiquitin chains protect 'Lys-63'-linkages from CYLD deubiquitination. Also participates in the TCR signaling by ubiquitinating LAT. This Rattus norvegicus (Rat) protein is TNF receptor-associated factor 6 (Traf6).